The primary structure comprises 282 residues: ATP synthase gamma chain (282 aa).

The protein belongs to the ATPase gamma chain family. In terms of assembly, F-type ATPases have 2 components, CF(1) - the catalytic core - and CF(0) - the membrane proton channel. CF(1) has five subunits: alpha(3), beta(3), gamma(1), delta(1), epsilon(1). CF(0) has three main subunits: a, b and c.

The protein resides in the cell inner membrane. Produces ATP from ADP in the presence of a proton gradient across the membrane. The gamma chain is believed to be important in regulating ATPase activity and the flow of protons through the CF(0) complex. This is ATP synthase gamma chain from Fusobacterium nucleatum subsp. nucleatum (strain ATCC 25586 / DSM 15643 / BCRC 10681 / CIP 101130 / JCM 8532 / KCTC 2640 / LMG 13131 / VPI 4355).